The chain runs to 148 residues: Large ribosomal subunit protein uL22 (148 aa).

It belongs to the universal ribosomal protein uL22 family. In terms of assembly, part of the 50S ribosomal subunit.

Functionally, this protein binds specifically to 23S rRNA. It makes multiple contacts with different domains of the 23S rRNA in the assembled 50S subunit and ribosome. Its function is as follows. The globular domain of the protein is located near the polypeptide exit tunnel on the outside of the subunit, while an extended beta-hairpin is found that lines the wall of the exit tunnel in the center of the 70S ribosome. The sequence is that of Large ribosomal subunit protein uL22 from Thermoplasma volcanium (strain ATCC 51530 / DSM 4299 / JCM 9571 / NBRC 15438 / GSS1).